The primary structure comprises 150 residues: D-aminoacyl-tRNA deacylase (150 aa).

The Gly-cisPro motif, important for rejection of L-amino acids signature appears at 136 to 137 (GP).

It belongs to the DTD family. In terms of assembly, homodimer.

The protein resides in the cytoplasm. It carries out the reaction glycyl-tRNA(Ala) + H2O = tRNA(Ala) + glycine + H(+). The catalysed reaction is a D-aminoacyl-tRNA + H2O = a tRNA + a D-alpha-amino acid + H(+). Its function is as follows. An aminoacyl-tRNA editing enzyme that deacylates mischarged D-aminoacyl-tRNAs. Also deacylates mischarged glycyl-tRNA(Ala), protecting cells against glycine mischarging by AlaRS. Acts via tRNA-based rather than protein-based catalysis; rejects L-amino acids rather than detecting D-amino acids in the active site. By recycling D-aminoacyl-tRNA to D-amino acids and free tRNA molecules, this enzyme counteracts the toxicity associated with the formation of D-aminoacyl-tRNA entities in vivo and helps enforce protein L-homochirality. This is D-aminoacyl-tRNA deacylase from Staphylococcus saprophyticus subsp. saprophyticus (strain ATCC 15305 / DSM 20229 / NCIMB 8711 / NCTC 7292 / S-41).